We begin with the raw amino-acid sequence, 207 residues long: MIKLCVFDFDATLMDGETIDILATAHGKGNQISEITRYAMAGELDFFESLQKRVSFLKGMSYKKVLELGSTLPLMHGAHELIQYLKSKNIQIVIFSGGFHEGIDPAMQKLGINLGFANYLHHKNDILTGLIGGEIMFSNSKGLMLQRLKSFLNLKTDEVMCVGDGANDLAMFNESGLKIAFCAKEILRSQADICIDIKDLKEIIKVI.

Catalysis depends on Asp8, which acts as the Nucleophile. Residues Asp8 and Asp10 each coordinate Mg(2+). Catalysis depends on Asp10, which acts as the Proton donor. Substrate-binding positions include Glu17, Arg53, 96 to 97, and Lys141; that span reads SG. Position 164 (Asp164) interacts with Mg(2+). Asn167 lines the substrate pocket.

It belongs to the HAD-like hydrolase superfamily. SerB family. It depends on Mg(2+) as a cofactor.

The enzyme catalyses O-phospho-L-serine + H2O = L-serine + phosphate. The catalysed reaction is O-phospho-D-serine + H2O = D-serine + phosphate. The protein operates within amino-acid biosynthesis; L-serine biosynthesis; L-serine from 3-phospho-D-glycerate: step 3/3. This Campylobacter jejuni subsp. doylei (strain ATCC BAA-1458 / RM4099 / 269.97) protein is Phosphoserine phosphatase.